Consider the following 397-residue polypeptide: Serpin B10 (397 aa).

The short motif at 74–77 (KKRK) is the Nuclear localization signal element.

Belongs to the serpin family. Ov-serpin subfamily. Expressed in many tissues, including brain, heart, kidney, liver, lung, prostate, skin, spleen and stomach.

It is found in the nucleus. The protein resides in the cytoplasm. In terms of biological role, protease inhibitor that may play a role in the regulation of protease activities during hematopoiesis and apoptosis induced by TNF. May regulate protease activities in the cytoplasm and in the nucleus. Inhibits plasmin. This Rattus norvegicus (Rat) protein is Serpin B10 (Serpinb10).